The sequence spans 445 residues: Ribosomal protein uS12 methylthiotransferase RimO (445 aa).

The 116-residue stretch at 4–119 (IKVALVSLGC…LLESIKVFLK (116 aa)) folds into the MTTase N-terminal domain. Cysteine 13, cysteine 48, cysteine 82, cysteine 156, cysteine 160, and cysteine 163 together coordinate [4Fe-4S] cluster. The Radical SAM core domain occupies 142–372 (TTPTYTAYVR…MILQQSISKD (231 aa)). A TRAM domain is found at 375-441 (KEKIGKIYEV…EYDLIGVVYN (67 aa)).

The protein belongs to the methylthiotransferase family. RimO subfamily. Requires [4Fe-4S] cluster as cofactor.

It localises to the cytoplasm. The enzyme catalyses L-aspartate(89)-[ribosomal protein uS12]-hydrogen + (sulfur carrier)-SH + AH2 + 2 S-adenosyl-L-methionine = 3-methylsulfanyl-L-aspartate(89)-[ribosomal protein uS12]-hydrogen + (sulfur carrier)-H + 5'-deoxyadenosine + L-methionine + A + S-adenosyl-L-homocysteine + 2 H(+). Functionally, catalyzes the methylthiolation of an aspartic acid residue of ribosomal protein uS12. The chain is Ribosomal protein uS12 methylthiotransferase RimO from Clostridium botulinum (strain Loch Maree / Type A3).